The following is a 73-amino-acid chain: Gas vesicle protein M2 (73 aa).

This sequence belongs to the gas vesicle GvpA family. As to quaternary structure, gvpF to GvpM interact with each other in vitro, and may form multi-subunit complex(es). Might interact with GvpA.

Its subcellular location is the gas vesicle. Proteins GvpF to GvpM might be involved in nucleating gas vesicle formation. A minor component of the gas vesicle. Gas vesicles are hollow, gas filled proteinaceous nanostructures found in several microbial planktonic microorganisms. They allow positioning of halobacteria at the optimal depth for growth in the poorly aerated, shallow brine pools of their habitat. Its function is as follows. Expression of 2 c-vac DNA fragments containing 2 divergently transcribed regions (gvpE-gvpF-gvpG-gvpH-gvpI-gvpJ-gvpK-gvpL-gvpM and gvpA-gvpC-gvpN-gvpO) allows H.volcanii to produce gas vesicles. The protein is Gas vesicle protein M2 of Halobacterium salinarum (strain ATCC 700922 / JCM 11081 / NRC-1) (Halobacterium halobium).